The primary structure comprises 786 residues: Protein SEY1 (786 aa).

Residues 1–684 (MSDLKEAIQL…KRSIVNTTER (684 aa)) are Cytoplasmic-facing. The GB1/RHD3-type G domain occupies 35 to 262 (GVKYHVISVF…QDASFFKDEY (228 aa)). 45-52 (GSQSSGKS) contacts GTP. Positions 355–375 (KKVYEERRDDLIKQLNTIIDE) form a coiled coil. A helical membrane pass occupies residues 685–705 (IPLYMYALVVALGWGRIITIL). The Lumenal portion of the chain corresponds to 706–708 (RNP). A helical membrane pass occupies residues 709–729 (ATIILSIIVLAGAYFVHKLNL). Topologically, residues 730-786 (WGPLLQFANQATGQATAVLKQTVRSLVVDEEPKRKILVEPHESEGVDKEPSKNDQHL) are cytoplasmic. Positions 765–786 (ILVEPHESEGVDKEPSKNDQHL) are disordered.

Belongs to the TRAFAC class dynamin-like GTPase superfamily. GB1/RHD3 GTPase family. RHD3 subfamily.

It is found in the endoplasmic reticulum membrane. In terms of biological role, cooperates with the reticulon proteins and tubule-shaping DP1 family proteins to generate and maintain the structure of the tubular endoplasmic reticulum network. Has GTPase activity, which is required for its function in ER organization. This chain is Protein SEY1, found in Kluyveromyces lactis (strain ATCC 8585 / CBS 2359 / DSM 70799 / NBRC 1267 / NRRL Y-1140 / WM37) (Yeast).